The sequence spans 450 residues: Bifunctional apoptosis regulator (450 aa).

The interval 1 to 24 (MEEPQKNDLSMRGQEEDHPVRSSG) is disordered. Residues 1 to 140 (MEEPQKNDLS…PSTGRVNQQR (140 aa)) are Cytoplasmic-facing. An RING-type zinc finger spans residues 34-74 (CHCCYDTLVNPTTLNCGHSFCRHCLALWWMSSKKTECPECR). A helical transmembrane segment spans residues 141 to 161 (GGGFFSGVLTALTGVAVILLV). Topologically, residues 162-331 (YHWRSRESEH…REPTWKQWRE (170 aa)) are extracellular. Residues 182 to 249 (WTTEEVVLWL…LMELERVRAL (68 aa)) form the SAM domain. N-linked (GlcNAc...) asparagine glycosylation is present at Asn-232. Residues 332-352 (FLIKYSFLPYQLIAEFAWDWL) form a helical membrane-spanning segment. Topologically, residues 353–360 (EVHYWTSR) are cytoplasmic. Residues 361–381 (FLIVNAMLLSVLELFSFWRIW) traverse the membrane as a helical segment. The Extracellular portion of the chain corresponds to 382-404 (SRSELKTVPQRMWSHFWKVSTQG). The chain crosses the membrane as a helical span at residues 405 to 425 (LFMAMFWPLIPQFVCNCLFYW). Residues 426-450 (ALYFNPIINIDLVVKEIRRLETQVF) are Cytoplasmic-facing.

As to quaternary structure, interacts with CASP8, BCL2 and BCL2L1 through SAM domain and also with HIP1, IFT57, ESRRBL1 and BCAP31. Interacts with NGFR; this interaction inhibits NF-kappa-B and JNK-related signaling pathways. In terms of processing, mediates RING-dependent self-ubiquitination leading to proteasomal degradation.

It is found in the endoplasmic reticulum membrane. It carries out the reaction S-ubiquitinyl-[E2 ubiquitin-conjugating enzyme]-L-cysteine + [acceptor protein]-L-lysine = [E2 ubiquitin-conjugating enzyme]-L-cysteine + N(6)-ubiquitinyl-[acceptor protein]-L-lysine.. Functionally, membrane-bound E3 ubiquitin ligase that plays a role in several processes including apoptosis regulation or reticulum endoplasmic stress. Has anti-apoptotic activity, both for apoptosis triggered via death-receptors and via mitochondrial factors. Contributes to the dynamic control of IRE1/ERN1 signaling during ER stress by inducing BAX inhibitor 1/TMBIM6 proteasomal degradation. Promotes the activation of TGF-beta signaling by mediating the 'Lys-63'-linked ubiquitination of TGFBR1 which is critical to activate the pathway. Together with NGFR, negatively regulates NF-kappa-B and JNK-related signaling pathways. Promotes the proteasome-mediated degradation of PNPLA3, a protein involveld in lipid metabolism. This chain is Bifunctional apoptosis regulator (Bfar), found in Rattus norvegicus (Rat).